A 100-amino-acid chain; its full sequence is Large ribosomal subunit protein uL23 (100 aa).

Belongs to the universal ribosomal protein uL23 family. As to quaternary structure, part of the 50S ribosomal subunit. Contacts protein L29, and trigger factor when it is bound to the ribosome.

Its function is as follows. One of the early assembly proteins it binds 23S rRNA. One of the proteins that surrounds the polypeptide exit tunnel on the outside of the ribosome. Forms the main docking site for trigger factor binding to the ribosome. The protein is Large ribosomal subunit protein uL23 of Prochlorococcus marinus (strain MIT 9515).